The chain runs to 217 residues: Thiamine-phosphate synthase (217 aa).

Residues 42–46 (QYRDK) and aspartate 77 each bind 4-amino-2-methyl-5-(diphosphooxymethyl)pyrimidine. 2 residues coordinate Mg(2+): aspartate 78 and aspartate 97. Serine 116 is a binding site for 4-amino-2-methyl-5-(diphosphooxymethyl)pyrimidine. Position 143–145 (143–145 (TTS)) interacts with 2-[(2R,5Z)-2-carboxy-4-methylthiazol-5(2H)-ylidene]ethyl phosphate. 4-amino-2-methyl-5-(diphosphooxymethyl)pyrimidine is bound at residue lysine 146. 2-[(2R,5Z)-2-carboxy-4-methylthiazol-5(2H)-ylidene]ethyl phosphate-binding positions include glycine 174 and 194–195 (IS).

It belongs to the thiamine-phosphate synthase family. The cofactor is Mg(2+).

The enzyme catalyses 2-[(2R,5Z)-2-carboxy-4-methylthiazol-5(2H)-ylidene]ethyl phosphate + 4-amino-2-methyl-5-(diphosphooxymethyl)pyrimidine + 2 H(+) = thiamine phosphate + CO2 + diphosphate. It carries out the reaction 2-(2-carboxy-4-methylthiazol-5-yl)ethyl phosphate + 4-amino-2-methyl-5-(diphosphooxymethyl)pyrimidine + 2 H(+) = thiamine phosphate + CO2 + diphosphate. The catalysed reaction is 4-methyl-5-(2-phosphooxyethyl)-thiazole + 4-amino-2-methyl-5-(diphosphooxymethyl)pyrimidine + H(+) = thiamine phosphate + diphosphate. Its pathway is cofactor biosynthesis; thiamine diphosphate biosynthesis; thiamine phosphate from 4-amino-2-methyl-5-diphosphomethylpyrimidine and 4-methyl-5-(2-phosphoethyl)-thiazole: step 1/1. Its function is as follows. Condenses 4-methyl-5-(beta-hydroxyethyl)thiazole monophosphate (THZ-P) and 2-methyl-4-amino-5-hydroxymethyl pyrimidine pyrophosphate (HMP-PP) to form thiamine monophosphate (TMP). The sequence is that of Thiamine-phosphate synthase from Lactiplantibacillus plantarum (strain ATCC BAA-793 / NCIMB 8826 / WCFS1) (Lactobacillus plantarum).